We begin with the raw amino-acid sequence, 140 residues long: Putative pre-16S rRNA nuclease (140 aa).

The protein belongs to the YqgF nuclease family.

It is found in the cytoplasm. Could be a nuclease involved in processing of the 5'-end of pre-16S rRNA. This chain is Putative pre-16S rRNA nuclease, found in Yersinia pseudotuberculosis serotype O:1b (strain IP 31758).